A 128-amino-acid chain; its full sequence is Probable 4-amino-4-deoxy-L-arabinose-phosphoundecaprenol flippase subunit ArnF (128 aa).

At 1 to 2 (MG) the chain is on the cytoplasmic side. A helical membrane pass occupies residues 3-23 (LIWGLFSVIIASVAQLSLGFA). The Periplasmic segment spans residues 24 to 35 (ASHLPPMTHLWD). Residues 36-56 (FIAALLAFGLDARILLLGLLG) form a helical membrane-spanning segment. Residues 57–75 (YLLSVFCWYKTLHKLALSK) are Cytoplasmic-facing. The helical transmembrane segment at 76 to 96 (AYALLSMSYVLVWIASMVLPG) threads the bilayer. Residues 97 to 100 (REGT) are Periplasmic-facing. A helical membrane pass occupies residues 101–121 (FSLKALLGVACIMSGLMLIFL). At 122–128 (PTTKQRY) the chain is on the cytoplasmic side.

It belongs to the ArnF family. Heterodimer of ArnE and ArnF.

Its subcellular location is the cell inner membrane. Its pathway is bacterial outer membrane biogenesis; lipopolysaccharide biosynthesis. Functionally, translocates 4-amino-4-deoxy-L-arabinose-phosphoundecaprenol (alpha-L-Ara4N-phosphoundecaprenol) from the cytoplasmic to the periplasmic side of the inner membrane. The polypeptide is Probable 4-amino-4-deoxy-L-arabinose-phosphoundecaprenol flippase subunit ArnF (Shigella flexneri serotype 5b (strain 8401)).